Reading from the N-terminus, the 685-residue chain is Probable transketolase (685 aa).

A substrate-binding site is contributed by His32. Thiamine diphosphate contacts are provided by residues His72 and 121–123; that span reads GPL. Residue Asp162 participates in Mg(2+) binding. Residues Gly163 and Asn192 each contribute to the thiamine diphosphate site. Positions 192 and 194 each coordinate Mg(2+). The substrate site is built by His268, Arg363, and Ser390. Residue His268 participates in thiamine diphosphate binding. Residues Glu422 and Phe448 each contribute to the thiamine diphosphate site. Glu422 functions as the Proton donor in the catalytic mechanism. Residues His472, Asp480, and Arg531 each contribute to the substrate site.

This sequence belongs to the transketolase family. As to quaternary structure, homodimer. The cofactor is Mg(2+). Ca(2+) serves as cofactor. Requires Mn(2+) as cofactor. It depends on Co(2+) as a cofactor. Thiamine diphosphate is required as a cofactor.

It catalyses the reaction D-sedoheptulose 7-phosphate + D-glyceraldehyde 3-phosphate = aldehydo-D-ribose 5-phosphate + D-xylulose 5-phosphate. Functionally, catalyzes the transfer of a two-carbon ketol group from a ketose donor to an aldose acceptor, via a covalent intermediate with the cofactor thiamine pyrophosphate. The sequence is that of Probable transketolase from Schizosaccharomyces pombe (strain 972 / ATCC 24843) (Fission yeast).